A 180-amino-acid polypeptide reads, in one-letter code: uncharacterized protein (180 aa).

Residues 31–180 (LLVRTAEWLR…HLFEKEITAE (150 aa)) form the N-acetyltransferase domain.

It belongs to the acetyltransferase family.

This is an uncharacterized protein from Bacillus subtilis (strain 168).